We begin with the raw amino-acid sequence, 1294 residues long: Leucine-rich repeat receptor protein kinase MSP1 (1294 aa).

The first 22 residues, 1–22 (MVSNSFWLFILLVSFIPISAWA), serve as a signal peptide directing secretion. LRR repeat units lie at residues 88–112 (FQSL…LGNL), 113–136 (QNLQ…LYNL), 138–160 (MLKE…IAQL), 161–184 (QHLT…LGSL), and 186–207 (NLEL…TFGN). Asparagine 198, asparagine 207, and asparagine 220 each carry an N-linked (GlcNAc...) asparagine glycan. LRR repeat units lie at residues 232–256 (LTNL…IGQL), 258–280 (NLEL…IGSL), 282–304 (QLKL…ISGL), 305–328 (SSLT…MGEL), 330–352 (NLTQ…LGNC), 353–376 (KKLT…FADL), 378–400 (AIVS…IQKW), 401–422 (KNAR…VLPL), 423–446 (QHLL…ICQA), 447–469 (NSLH…AFKG), 471–493 (TNLT…YLAE), 494–517 (LPLV…LWES), 519–541 (TLLE…IGKL), 542–565 (SVLQ…VGDL), 566–589 (RNLT…LFNC), 591–613 (KLAT…ISHL), 614–637 (TLLD…ICVG), 649–673 (LQHH…IKNC), 675–697 (MVMV…LGEL), 698–721 (TNLT…SGPL), 722–745 (VQLQ…IGQI), 746–770 (LPKI…LLCN), and 772–794 (YLNH…CPDG). N-linked (GlcNAc...) asparagine glycans are attached at residues asparagine 330 and asparagine 359. N-linked (GlcNAc...) asparagine glycosylation is found at asparagine 458 and asparagine 472. N-linked (GlcNAc...) asparagine glycosylation is found at asparagine 567, asparagine 570, and asparagine 601. Residues asparagine 687, asparagine 699, and asparagine 704 are each glycosylated (N-linked (GlcNAc...) asparagine). Asparagine 805, asparagine 821, and asparagine 832 each carry an N-linked (GlcNAc...) asparagine glycan. 2 LRR repeats span residues 822 to 846 (FTQL…LSDL) and 848 to 870 (SLNY…ICNI). Residues 917 to 937 (ITICAFTFVIIIVLVLLAVYL) traverse the membrane as a helical segment. The Protein kinase domain maps to 1002–1282 (FSKVHIIGDG…KGLKMTHGME (281 aa)). Residues 1008 to 1016 (IGDGGFGTV) and lysine 1030 contribute to the ATP site. Residue aspartate 1129 is the Proton acceptor of the active site.

Belongs to the protein kinase superfamily. Ser/Thr protein kinase family. As to quaternary structure, interacts with TDL1A. In terms of tissue distribution, expressed in anthers and ovules during meiosis.

It is found in the cell membrane. The enzyme catalyses L-seryl-[protein] + ATP = O-phospho-L-seryl-[protein] + ADP + H(+). The catalysed reaction is L-threonyl-[protein] + ATP = O-phospho-L-threonyl-[protein] + ADP + H(+). Receptor-like kinase that plays important roles in restricting the number of cells entering into male and female sporogenesis. Involved in cell specification during anther development and initiation of anther wall formation. This chain is Leucine-rich repeat receptor protein kinase MSP1, found in Oryza sativa subsp. japonica (Rice).